Consider the following 603-residue polypeptide: NADH-ubiquinone oxidoreductase chain 5 (603 aa).

16 helical membrane passes run 4–24 (YTTM…ATLI), 36–56 (VKMT…MFMC), 87–107 (MMFI…SLWY), 114–134 (INQF…LVTA), 137–157 (LFQL…LIGW), 171–191 (AILY…WFLL), 200–220 (QMIL…LLAA), 241–261 (TPVS…FLLI), 272–292 (LIQT…AICA), 301–320 (IVAF…IGIN), 325–347 (AFLH…GSII), 366–386 (LPLT…MPFL), 407–429 (WALS…MILL), 457–477 (LTIG…PTSP), 482–502 (IPLY…LTAF), and 583–603 (MIKL…LLIM).

Belongs to the complex I subunit 5 family. Core subunit of respiratory chain NADH dehydrogenase (Complex I) which is composed of 45 different subunits.

It localises to the mitochondrion inner membrane. It catalyses the reaction a ubiquinone + NADH + 5 H(+)(in) = a ubiquinol + NAD(+) + 4 H(+)(out). In terms of biological role, core subunit of the mitochondrial membrane respiratory chain NADH dehydrogenase (Complex I) which catalyzes electron transfer from NADH through the respiratory chain, using ubiquinone as an electron acceptor. Essential for the catalytic activity and assembly of complex I. The protein is NADH-ubiquinone oxidoreductase chain 5 (MT-ND5) of Hylobates lar (Lar gibbon).